Here is a 242-residue protein sequence, read N- to C-terminus: ATP-dependent dethiobiotin synthetase BioD (242 aa).

12–17 (EVGKTV) is an ATP binding site. Thr-16 provides a ligand contact to Mg(2+). The active site involves Lys-37. Ser-41 is a substrate binding site. ATP is bound by residues Asp-51 and 112–115 (EGAG). 2 residues coordinate Mg(2+): Asp-51 and Glu-112.

The protein belongs to the dethiobiotin synthetase family. In terms of assembly, homodimer. Mg(2+) is required as a cofactor.

The protein resides in the cytoplasm. The enzyme catalyses (7R,8S)-7,8-diammoniononanoate + CO2 + ATP = (4R,5S)-dethiobiotin + ADP + phosphate + 3 H(+). It participates in cofactor biosynthesis; biotin biosynthesis; biotin from 7,8-diaminononanoate: step 1/2. In terms of biological role, catalyzes a mechanistically unusual reaction, the ATP-dependent insertion of CO2 between the N7 and N8 nitrogen atoms of 7,8-diaminopelargonic acid (DAPA, also called 7,8-diammoniononanoate) to form a ureido ring. This chain is ATP-dependent dethiobiotin synthetase BioD, found in Bacillus thuringiensis subsp. konkukian (strain 97-27).